The primary structure comprises 88 residues: Molybdopterin synthase sulfur carrier subunit (88 aa).

Residue Gly88 is modified to 1-thioglycine; alternate. Gly88 is modified (glycyl adenylate; alternate).

The protein belongs to the MoaD family. MOCS2A subfamily. As to quaternary structure, heterotetramer; composed of 2 small (MOCS2A) and 2 large (MOCS2B) subunits. C-terminal thiocarboxylation occurs in 2 steps, it is first acyl-adenylated (-COAMP) via the hesA/moeB/thiF part of MOCS3, then thiocarboxylated (-COSH) via the rhodanese domain of MOCS3. Widely expressed. Highest levels are found in heart and skeletal muscle. Lower levels are present in brain, kidney and pancreas. Very low levels are found in lung and peripheral blood leukocytes.

It is found in the cytoplasm. The protein localises to the cytosol. The protein operates within cofactor biosynthesis; molybdopterin biosynthesis. Functionally, acts as a sulfur carrier required for molybdopterin biosynthesis. Component of the molybdopterin synthase complex that catalyzes the conversion of precursor Z into molybdopterin by mediating the incorporation of 2 sulfur atoms into precursor Z to generate a dithiolene group. In the complex, serves as sulfur donor by being thiocarboxylated (-COSH) at its C-terminus by MOCS3. After interaction with MOCS2B, the sulfur is then transferred to precursor Z to form molybdopterin. In Homo sapiens (Human), this protein is Molybdopterin synthase sulfur carrier subunit.